A 244-amino-acid polypeptide reads, in one-letter code: Phosphoadenosine 5'-phosphosulfate reductase (244 aa).

C239 acts as the Nucleophile; cysteine thiosulfonate intermediate in catalysis.

It belongs to the PAPS reductase family. CysH subfamily.

It is found in the cytoplasm. The catalysed reaction is [thioredoxin]-disulfide + sulfite + adenosine 3',5'-bisphosphate + 2 H(+) = [thioredoxin]-dithiol + 3'-phosphoadenylyl sulfate. It functions in the pathway sulfur metabolism; hydrogen sulfide biosynthesis; sulfite from sulfate: step 3/3. In terms of biological role, catalyzes the formation of sulfite from phosphoadenosine 5'-phosphosulfate (PAPS) using thioredoxin as an electron donor. The protein is Phosphoadenosine 5'-phosphosulfate reductase of Buchnera aphidicola subsp. Acyrthosiphon pisum (strain Tuc7).